The following is a 352-amino-acid chain: Endophilin-A1 (352 aa).

The membrane-binding amphipathic helix stretch occupies residues 1-21; sequence MSVAGLKKQFHKATQKVSEKV. The tract at residues 1-27 is disordered; it reads MSVAGLKKQFHKATQKVSEKVGGAEGT. A binds and tubulates liposomes region spans residues 1–125; the sequence is MSVAGLKKQF…EVGEAMRELS (125 aa). Residues 18 to 249 enclose the BAR domain; the sequence is SEKVGGAEGT…LEERIRQASS (232 aa). A required for dimerization upon membrane association region spans residues 60 to 87; the sequence is PNPASRAKLSMINTMSKIRGQEKGPGYP. Residues 181 to 248 adopt a coiled-coil conformation; the sequence is EELRQALEKF…RLEERIRQAS (68 aa). The segment covering 245 to 257 has biased composition (basic and acidic residues); the sequence is RQASSQPRREYQP. The interval 245-289 is disordered; it reads RQASSQPRREYQPKPRMSLEFPTGDSTQPNGGLSHTGTPKPSGVQ. Residue Ser-262 is modified to Phosphoserine. A compositionally biased stretch (polar residues) spans 268 to 283; the sequence is GDSTQPNGGLSHTGTP. An SH3 domain is found at 290-349; it reads MDQPCCRALYDFEPENEGELGFKEGDIITLTNQIDENWYEGMLHGHSGFFPINYVEILVA. Tyr-299 carries the post-translational modification Phosphotyrosine.

This sequence belongs to the endophilin family. As to quaternary structure, monomer; in cytoplasm. Homodimer; when associated with membranes. Interacts with OPHN1. Interacts with SYNJ1. Interacts with DNM1. Interacts with MAP4K3; the interaction appears to regulate MAP4K3-mediated JNK activation. Interacts with PDCD6IP. Interacts with ATXN2. Interacts with ADAM9 and ADAM15 cytoplasmic tails. Interacts with BIN2. Interacts with TMEM108. Interacts with ADGRB2. In terms of tissue distribution, brain, mostly in frontal cortex. Expressed at high level in fetal cerebellum.

It localises to the cytoplasm. It is found in the membrane. The protein localises to the early endosome. Its subcellular location is the presynapse. In terms of biological role, implicated in synaptic vesicle endocytosis. May recruit other proteins to membranes with high curvature. Required for BDNF-dependent dendrite outgrowth. Cooperates with SH3GL2 to mediate BDNF-NTRK2 early endocytic trafficking and signaling from early endosomes. The polypeptide is Endophilin-A1 (SH3GL2) (Homo sapiens (Human)).